The chain runs to 523 residues: Cytochrome P450 monooxygenase ple5B (523 aa).

A helical transmembrane segment spans residues 16 to 33 (IAAAAAGSAVAVYKLLQL). Residues Asn-82, Asn-103, Asn-122, Asn-295, Asn-379, and Asn-423 are each glycosylated (N-linked (GlcNAc...) asparagine). Residue Cys-446 participates in heme binding.

The protein belongs to the cytochrome P450 family. Heme serves as cofactor.

It is found in the membrane. It participates in secondary metabolite biosynthesis; terpenoid biosynthesis. Functionally, cytochrome P450 monooxygenase; part of the gene cluster that mediates the biosynthesis of pleuromutilin, a tricyclic diterpene showing antibacterial properties. The geranylgeranyl diphosphate (GGPP) synthase ple4 catalyzes the first step in pleuromutilin biosynthesis. GGPP is then substrate of the premutilin synthase (PS) ple3 to yield premutilin. Premutilin synthase is a bifunctional enzyme composed of the fusion of a class II diterpene cyclase (DTC) and a class I diterpene synthase (DTS), with the corresponding domains and active sites containing characteristic aspartate-rich motifs. GGPP is first converted to mutildienyl-diphosphate (MPP) at the class II DTC site. MPP is subsequently further cyclized at the class I DTS site, followed by a 1,5-hydride shift and addition of water prior to terminating deprotonation, to yield premutilin. The cytochrome P450 monooxygenases ple5 and ple6 hydroxylate premutilin at C-11 and C-3, respectively, producing 11-hydroxypremutilin and 3-hydroxypremutilin. The combination of the actions of both ple5 and ple6 leads to the production of 3,11-dihydroxypremutilin. The short chain dehydrogenase ple7 further converts 3,11-dihydroxypremutilin into mutilin. The acetyltransferase ple2 then acetylates mutilin to produce 14-O-acetylmutilin. Finally, the cytochrome P450 monooxygenase ple1 catalyzes hydroxylation on the alpha position of the acetyl side chain of 14-O-acetylmutilin to yield pleuromutilin. The polypeptide is Cytochrome P450 monooxygenase ple5B (Rhodocybe pseudopiperita (Clitopilus pseudopiperitus)).